The chain runs to 599 residues: Pentatricopeptide repeat-containing protein At3g62470, mitochondrial (599 aa).

Residues Met1–Val99 constitute a mitochondrion transit peptide. PPR repeat units follow at residues Asp194–Thr228, Glu230–Ile262, Gly263–Arg293, Asn297–Pro331, Asp332–Pro366, Asn367–Pro401, Asp402–Pro436, Asp437–Pro471, Ser472–Pro506, and Asp507–Thr541.

The protein belongs to the PPR family. P subfamily.

It is found in the mitochondrion. The polypeptide is Pentatricopeptide repeat-containing protein At3g62470, mitochondrial (Arabidopsis thaliana (Mouse-ear cress)).